A 255-amino-acid polypeptide reads, in one-letter code: 5'-nucleotidase SurE (255 aa).

Asp8, Asp9, Ser40, and Asn93 together coordinate a divalent metal cation.

It belongs to the SurE nucleotidase family. A divalent metal cation is required as a cofactor.

Its subcellular location is the cytoplasm. It catalyses the reaction a ribonucleoside 5'-phosphate + H2O = a ribonucleoside + phosphate. Its function is as follows. Nucleotidase that shows phosphatase activity on nucleoside 5'-monophosphates. The chain is 5'-nucleotidase SurE from Nitrobacter hamburgensis (strain DSM 10229 / NCIMB 13809 / X14).